Here is a 708-residue protein sequence, read N- to C-terminus: MATTAELFEEPFVADEYIERLVWRTPGGGSRGGPEAFDPKRLLEEFVNHIQELQIMDERIQRKVEKLEQQCQKEAKEFAKKVQELQKSNQVAFQHFQELDEHISYVATKVCHLGDQLEGVNTPRQRAVEAQKLMKYFNEFLDGELKSDVFTNPEKIKEAADVIQKLHLIAQELPFDRFSEVKSKIASKYHDLECQLIQEFTSAQRRGEVSRMREVAAVLLHFKGYSHCIDVYIKQCQEGAYLRNDIFEDAAILCQRVNKQVGDIFSNPEAVLAKLIQNVFEVKLQSFVKDQLEECRKSDAEQYLKSLYDLYTRTTSLSSKLMEFNLGTDKQTFLSKLIKSIFVSYLENYIEVEIGYLKSRSAMILQRYYDSKNHQKRSIGTGGIQDLKERIRQRTNLPLGPSIDTHGETFLSQEVVVNLLQETKQAFERCHRLSDPSDLPRNAFRIFTILVEFLCIEHIDYALETGLAGIPSSDSRNANLYFLDVVQQANTIFHLFDKQFNDHLMPLISSSPKLSECLQKKKEIIEQMEMKLDTGIDRTLNCMIGQMKHILAAEQKKTDFKPEDENNVLIQYTNACVKVCAYVRKQVEKIKNSMDGKNVDTVLMELGVRFHRLTYEHLQQYSYSCMGGMLAICDVAEYRKCAKDFKIPMVLHLFDTLHALCNLLVVAPDNLKQVCSGEQLANLDKNILHSFVQLRADYRSARLARHFS.

A2 is subject to N-acetylalanine. Residues 40–101 (KRLLEEFVNH…AFQHFQELDE (62 aa)) adopt a coiled-coil conformation. Residues T122, T395, and T405 each carry the phosphothreonine modification. At S412 the chain carries Phosphoserine.

It belongs to the SEC10 family. The exocyst complex is composed of EXOC1, EXOC2, EXOC3, EXOC4, EXOC5, EXOC6, EXOC7 and EXOC8. Interacts with EXOC3L1. As to expression, ubiquitous.

The protein localises to the cytoplasm. Its subcellular location is the midbody. In terms of biological role, component of the exocyst complex involved in the docking of exocytic vesicles with fusion sites on the plasma membrane. This Rattus norvegicus (Rat) protein is Exocyst complex component 5 (Exoc5).